Consider the following 115-residue polypeptide: uncharacterized protein (115 aa).

The tract at residues 1 to 74 (MGTGLRSQSL…VPGSLGDTEQ (74 aa)) is disordered.

This is an uncharacterized protein from Homo sapiens (Human).